Consider the following 461-residue polypeptide: Fumarate hydratase class II (461 aa).

Residues 97–99, 127–130, 137–139, and T185 contribute to the substrate site; these read SGT, HPND, and SSN. H186 serves as the catalytic Proton donor/acceptor. S316 is a catalytic residue. Substrate contacts are provided by residues S317 and 322–324; that span reads KVN.

The protein belongs to the class-II fumarase/aspartase family. Fumarase subfamily. In terms of assembly, homotetramer.

The protein resides in the cytoplasm. It catalyses the reaction (S)-malate = fumarate + H2O. It participates in carbohydrate metabolism; tricarboxylic acid cycle; (S)-malate from fumarate: step 1/1. Involved in the TCA cycle. Catalyzes the stereospecific interconversion of fumarate to L-malate. This Staphylococcus aureus (strain COL) protein is Fumarate hydratase class II.